We begin with the raw amino-acid sequence, 219 residues long: Orotate phosphoribosyltransferase (219 aa).

K26 serves as a coordination point for 5-phospho-alpha-D-ribose 1-diphosphate. Residue 34–35 (FF) coordinates orotate. Residues 72–73 (YK), R98, K99, K102, H104, and 124–132 (DDVITAGTA) each bind 5-phospho-alpha-D-ribose 1-diphosphate. Residues T128 and R156 each contribute to the orotate site.

This sequence belongs to the purine/pyrimidine phosphoribosyltransferase family. PyrE subfamily. In terms of assembly, homodimer. Requires Mg(2+) as cofactor.

It carries out the reaction orotidine 5'-phosphate + diphosphate = orotate + 5-phospho-alpha-D-ribose 1-diphosphate. It participates in pyrimidine metabolism; UMP biosynthesis via de novo pathway; UMP from orotate: step 1/2. Catalyzes the transfer of a ribosyl phosphate group from 5-phosphoribose 1-diphosphate to orotate, leading to the formation of orotidine monophosphate (OMP). The chain is Orotate phosphoribosyltransferase from Xanthomonas campestris pv. campestris (strain 8004).